A 530-amino-acid polypeptide reads, in one-letter code: Serendipity locus protein alpha (530 aa).

Transient expression in blastoderm from nuclear cycle 11 to the onset of gastrulation.

It localises to the cytoplasm. The protein resides in the cell membrane. Its function is as follows. Required for the cellularization of the syncytial blastoderm embryo. Involved in the localization of the actin filaments just prior to and during plasma membrane invagination. Sry-alpha together with nullo and bnk may provide auxiliary functions, by acting both to stabilize a large and dynamic microfilament structure and regulate its functions. The polypeptide is Serendipity locus protein alpha (Sry-alpha) (Drosophila melanogaster (Fruit fly)).